We begin with the raw amino-acid sequence, 174 residues long: Alpha-crystallin B chain (174 aa).

Methionine 1 is modified (N-acetylmethionine). The sHSP domain occupies 55–163; that stretch reads RMPSWLETGL…PERSIPITRE (109 aa). Residues histidine 82, histidine 103, glutamate 105, and histidine 110 each coordinate Zn(2+). The disordered stretch occupies residues 148–174; sequence RKQSDVPERSIPITREEKPAIAGSQRK. The span at 149-166 shows a compositional bias: basic and acidic residues; that stretch reads KQSDVPERSIPITREEKP.

Belongs to the small heat shock protein (HSP20) family. As to quaternary structure, heteromer composed of three CRYAA and one CRYAB subunits. Aggregates with homologous proteins, including the small heat shock protein HSPB1, to form large heteromeric complexes. Inter-subunit bridging via zinc ions enhances stability, which is crucial as there is no protein turn over in the lens. As to expression, lens as well as other tissues.

In terms of biological role, may contribute to the transparency and refractive index of the lens. In Gallus gallus (Chicken), this protein is Alpha-crystallin B chain (CRYAB).